The following is a 176-amino-acid chain: Shikimate kinase (176 aa).

14–19 (GAGKST) contacts ATP. S18 is a Mg(2+) binding site. Residues D36, R60, and G83 each contribute to the substrate site. R121 lines the ATP pocket. R140 is a binding site for substrate.

The protein belongs to the shikimate kinase family. Monomer. Mg(2+) serves as cofactor.

The protein resides in the cytoplasm. The catalysed reaction is shikimate + ATP = 3-phosphoshikimate + ADP + H(+). It functions in the pathway metabolic intermediate biosynthesis; chorismate biosynthesis; chorismate from D-erythrose 4-phosphate and phosphoenolpyruvate: step 5/7. Catalyzes the specific phosphorylation of the 3-hydroxyl group of shikimic acid using ATP as a cosubstrate. The sequence is that of Shikimate kinase from Francisella tularensis subsp. holarctica (strain FTNF002-00 / FTA).